A 248-amino-acid polypeptide reads, in one-letter code: Tryptophan synthase alpha chain (248 aa).

Residues glutamate 36 and aspartate 47 each act as proton acceptor in the active site.

It belongs to the TrpA family. Tetramer of two alpha and two beta chains.

The catalysed reaction is (1S,2R)-1-C-(indol-3-yl)glycerol 3-phosphate + L-serine = D-glyceraldehyde 3-phosphate + L-tryptophan + H2O. The protein operates within amino-acid biosynthesis; L-tryptophan biosynthesis; L-tryptophan from chorismate: step 5/5. In terms of biological role, the alpha subunit is responsible for the aldol cleavage of indoleglycerol phosphate to indole and glyceraldehyde 3-phosphate. This is Tryptophan synthase alpha chain from Archaeoglobus fulgidus (strain ATCC 49558 / DSM 4304 / JCM 9628 / NBRC 100126 / VC-16).